A 132-amino-acid chain; its full sequence is Small ribosomal subunit protein uS8 (132 aa).

Belongs to the universal ribosomal protein uS8 family. In terms of assembly, part of the 30S ribosomal subunit. Contacts proteins S5 and S12.

Functionally, one of the primary rRNA binding proteins, it binds directly to 16S rRNA central domain where it helps coordinate assembly of the platform of the 30S subunit. This chain is Small ribosomal subunit protein uS8, found in Anaeromyxobacter sp. (strain Fw109-5).